We begin with the raw amino-acid sequence, 253 residues long: 3-deoxy-manno-octulosonate cytidylyltransferase (253 aa).

It belongs to the KdsB family.

It is found in the cytoplasm. The catalysed reaction is 3-deoxy-alpha-D-manno-oct-2-ulosonate + CTP = CMP-3-deoxy-beta-D-manno-octulosonate + diphosphate. Its pathway is nucleotide-sugar biosynthesis; CMP-3-deoxy-D-manno-octulosonate biosynthesis; CMP-3-deoxy-D-manno-octulosonate from 3-deoxy-D-manno-octulosonate and CTP: step 1/1. It functions in the pathway bacterial outer membrane biogenesis; lipopolysaccharide biosynthesis. Activates KDO (a required 8-carbon sugar) for incorporation into bacterial lipopolysaccharide in Gram-negative bacteria. The protein is 3-deoxy-manno-octulosonate cytidylyltransferase of Neisseria gonorrhoeae (strain ATCC 700825 / FA 1090).